A 430-amino-acid polypeptide reads, in one-letter code: Asparagine--tRNA ligase (430 aa).

Belongs to the class-II aminoacyl-tRNA synthetase family. As to quaternary structure, homodimer.

The protein localises to the cytoplasm. It catalyses the reaction tRNA(Asn) + L-asparagine + ATP = L-asparaginyl-tRNA(Asn) + AMP + diphosphate + H(+). This is Asparagine--tRNA ligase from Bacillus velezensis (strain DSM 23117 / BGSC 10A6 / LMG 26770 / FZB42) (Bacillus amyloliquefaciens subsp. plantarum).